The sequence spans 478 residues: Ribosomal RNA small subunit methyltransferase F (478 aa).

Residues 121–127 (ASAPGSK), Glu145, Asp172, and Asp190 contribute to the S-adenosyl-L-methionine site. Cys243 acts as the Nucleophile in catalysis.

It belongs to the class I-like SAM-binding methyltransferase superfamily. RsmB/NOP family.

The protein resides in the cytoplasm. It catalyses the reaction cytidine(1407) in 16S rRNA + S-adenosyl-L-methionine = 5-methylcytidine(1407) in 16S rRNA + S-adenosyl-L-homocysteine + H(+). In terms of biological role, specifically methylates the cytosine at position 1407 (m5C1407) of 16S rRNA. This is Ribosomal RNA small subunit methyltransferase F from Shewanella sediminis (strain HAW-EB3).